The sequence spans 416 residues: 3-oxoacyl-[acyl-carrier-protein] synthase 1 (416 aa).

A Ketosynthase family 3 (KS3) domain is found at 11–415; it reads FPSVVVTAVT…GHNVALAFGR (405 aa). Active-site for beta-ketoacyl synthase activity residues include cysteine 171, histidine 311, and histidine 345. Substrate is bound by residues histidine 311 and histidine 345.

The protein belongs to the thiolase-like superfamily. Beta-ketoacyl-ACP synthases family.

It is found in the cytoplasm. The enzyme catalyses an ultra-long-chain mono-unsaturated fatty acyl-[ACP] + malonyl-[ACP] + H(+) = a 3-oxo-ultra-long-chain mono-unsaturated fatty acyl-[ACP] + holo-[ACP] + CO2. The protein operates within lipid metabolism; mycolic acid biosynthesis. Its function is as follows. Part of the mycobacterial fatty acid elongation system FAS-II, which is involved in mycolic acid biosynthesis. Catalyzes the elongation of long chain acyl-ACP substrates by the addition of two carbons from malonyl-ACP to an acyl acceptor. Involved in the initial extension of the mycolate chain and forms monounsaturated fatty acids that averaged 40 carbons in length. This chain is 3-oxoacyl-[acyl-carrier-protein] synthase 1 (kasA), found in Mycobacterium leprae (strain TN).